A 479-amino-acid chain; its full sequence is MKKLSSISTALGSFLLSVSFSLPTFANINVSDLTQKLPEGSNVGFIAKNINQNQIIADYNGSTFMLSASTQKVFTAVAAKLALDDQFQFETALLSNGKIQNGNLDGNLIVRFTGDPDLTRGQLYSLLAELKKQGIKKINGDLVLDTSVFSSHDRGLGWIWNDLTMCFNSPPAAANIDNNCFYAELDANKNPGEIVKINVPAQFPIQVFGQVYVADSNEAPYCQLDVVVHDNNRYQVKGCLARQYKPFGLSFAVQNTDAYAAEIIQRQLRQLGIEFNGKVLLPQKPQQGQLLAKHLSKPLPDLLKKMMKKSDNQIADSLFRAVAFNYYKRPASFQLGTLAVKSILQKQGIRFGNSILADGSGLSRHNLVAPKTMLSVLEYIAKNEDKLHLMETFPIAGVDGTISGRGGLISPPLVKNVIAKTGSLKGVYNLAGFMTNARGEKVAFVQFINGYSTGDLESKTKRAPLVQFERNLYNELYKY.

An N-terminal signal peptide occupies residues 1–26 (MKKLSSISTALGSFLLSVSFSLPTFA). Catalysis depends on Ser-69, which acts as the Acyl-ester intermediate. Lys-72 acts as the Proton acceptor in catalysis. Ser-310 is a catalytic residue. Lys-420 serves as a coordination point for substrate.

It belongs to the peptidase S13 family.

The protein resides in the periplasm. The enzyme catalyses Preferential cleavage: (Ac)2-L-Lys-D-Ala-|-D-Ala. Also transpeptidation of peptidyl-alanyl moieties that are N-acyl substituents of D-alanine.. It functions in the pathway cell wall biogenesis; peptidoglycan biosynthesis. Functionally, not involved in transpeptidation but exclusively catalyzes a DD-carboxypeptidase and DD-endopeptidase reaction. The protein is D-alanyl-D-alanine carboxypeptidase DacB (dacB) of Haemophilus influenzae (strain ATCC 51907 / DSM 11121 / KW20 / Rd).